The chain runs to 229 residues: Potassium/proton antiporter CemA (229 aa).

3 consecutive transmembrane segments (helical) span residues 7 to 27, 106 to 126, and 193 to 213; these read LTPF…SLSF, LILH…YSIL, and LVST…FLFL.

Belongs to the CemA family.

It localises to the plastid. It is found in the chloroplast inner membrane. It carries out the reaction K(+)(in) + H(+)(out) = K(+)(out) + H(+)(in). In terms of biological role, contributes to K(+)/H(+) antiport activity by supporting proton efflux to control proton extrusion and homeostasis in chloroplasts in a light-dependent manner to modulate photosynthesis. Prevents excessive induction of non-photochemical quenching (NPQ) under continuous-light conditions. Indirectly promotes efficient inorganic carbon uptake into chloroplasts. The protein is Potassium/proton antiporter CemA of Illicium oligandrum (Star anise).